The primary structure comprises 275 residues: NAC domain-containing protein 2 (275 aa).

The NAC domain occupies 10 to 162 (LPPGFRFHPT…DWVLCRIYKK (153 aa)). A DNA-binding region spans residues 107-168 (VGIKKALVFY…IYKKKNLERA (62 aa)).

As to expression, expressed in roots, stem, flowers, and leaves.

The protein resides in the nucleus. Transcription factor that binds DNA motifs 5'-CGT[AG](5N)NACG[ACT][AC][AT][ACG][ACT]-3' and 5'-CACG[ACT][AC][AT][AGT][CT]-3' in target genes promoters. Promotes leaf senescence (developmental, light-induced and ABA-induced senescence) and regulates fruit yield and sugar content, probably by establishing abscisic acid (ABA) homeostasis. Activates the expression of senescence and ABA associated genes including NCED1, ABCG40, CYP707A2, SAG113, SGR1 and PAO, by directly binding to their promoters. The protein is NAC domain-containing protein 2 of Solanum lycopersicum (Tomato).